The following is a 596-amino-acid chain: MIDILGDWKRSHFCGSITAADTGKEVCLMGWVQRRRDHGGLIFIDLRDRQGIAQLALDPDRDPEAHAKAERVRNEYVVAVRGIVSARPEGTVNPKMATGEVEVEVKELRMLNGAETPPFLIEDNVDVAENIRLKHRYLDLRRPALQSNLVLRHKVAQIVRNYLNDTGFIEVETPVLTKSTPEGARDYLVPSRVNPGMFYALPQSPQLFKQLLMVSGFDRYYQIVKCFRDEDLRADRQPEFTQIDCELSFVDRQDIMDIMEAMIATVFQQILGIELSLPMPRITYTESMARFGVDNPDMRFDLELVEISNIAKDCGFKVFADAVKKGGIVKLLNAKQCASFSRKEIDDLTDFVKIYGAKGLAYVKIQEDGSWQSPIAKFFTEKEIALIDEAAGSEPGDLLLFAADTFKVANESLGRLRGHLGQKLGLARKDDFRFAWVTDFPLLEWDGEARRHVAVHHPFTAPLDEDIALLDGDPGSARAKAYDLVLNGSEIGGGSIRIHNREIQNKMFSLMGITAEEAEEKFGFLLGALSYGAPPHGGIAFGLDRLMMILTGSDSIRDVIAFPKTQKATCLLSEAPGAVDDKQLRELSIRRAVRNN.

E182 contributes to the L-aspartate binding site. Residues 206–209 form an aspartate region; that stretch reads QLFK. Position 228 (R228) interacts with L-aspartate. ATP is bound by residues 228–230 and Q237; that span reads RDE. Residue H456 participates in L-aspartate binding. E490 contacts ATP. R497 provides a ligand contact to L-aspartate. Residue 542 to 545 coordinates ATP; that stretch reads GLDR.

It belongs to the class-II aminoacyl-tRNA synthetase family. Type 1 subfamily. Homodimer.

Its subcellular location is the cytoplasm. It carries out the reaction tRNA(Asx) + L-aspartate + ATP = L-aspartyl-tRNA(Asx) + AMP + diphosphate. Its function is as follows. Aspartyl-tRNA synthetase with relaxed tRNA specificity since it is able to aspartylate not only its cognate tRNA(Asp) but also tRNA(Asn). Reaction proceeds in two steps: L-aspartate is first activated by ATP to form Asp-AMP and then transferred to the acceptor end of tRNA(Asp/Asn). The polypeptide is Aspartate--tRNA(Asp/Asn) ligase (Syntrophotalea carbinolica (strain DSM 2380 / NBRC 103641 / GraBd1) (Pelobacter carbinolicus)).